The following is a 244-amino-acid chain: 5-oxoprolinase subunit A (244 aa).

It belongs to the LamB/PxpA family. As to quaternary structure, forms a complex composed of PxpA, PxpB and PxpC.

It carries out the reaction 5-oxo-L-proline + ATP + 2 H2O = L-glutamate + ADP + phosphate + H(+). Functionally, catalyzes the cleavage of 5-oxoproline to form L-glutamate coupled to the hydrolysis of ATP to ADP and inorganic phosphate. The polypeptide is 5-oxoprolinase subunit A (Escherichia coli (strain SE11)).